Here is a 918-residue protein sequence, read N- to C-terminus: MSYNRLGDPYGDDRDARSPIMNPSSLSNRSPSPGRPLDGYQLSDAPYGHHHHIEMPSSDRLAEQPTYSVERIPQSYGHNEAYEAQHQHYPGYEYSVDPEAHHDAYYTQPYQPTVTPGHDDYDLGQYPGHQHSYQDDEPILQPEDPFQAQNPYSDDYQEDMTIAPTPSPAPLRRWKTVKEVQLFQGNLVLDCPIAPKLLNQIPHAENGQRDEFTHMRYSAATCDPKDFFEERFTLRQKLFAKPRHTELFIVVTMYNEDDFLFARTMVGVFKNIEHMCSRTRSKTWGKDAWKKIVVCVISDGRAKINPRTRAVLAGLGCYQDGIAKQQVNGKDVTAHIYEYTTQVGMELKGNQVHLKPRSGVPVQMIFCLKEKNQKKINSHRWFFQAFGRVLDPNICVLLDAGTQPGKDSIYRLWKAFDVEPMCGGACGEIKVMLDHGKKLFNPLVAGQNFEYKLSNILDKPLESAFGFISVLPGAFSAYRYIALQNDKNGQGPLERYFLGEKMHGANAGIFTANMYLAEDRILCFEIVTKRNCRWLLQYVKSSTGETDVPDQMAEFILQRRRWLNGSFFAAVYAITHFYQLWRSDHSFIRKFMLLIETIYQTINMLFAWFGIGNFFLVFHILTTYLGDADLLGTAGKVLGVVFEWLYLATLVTCFVLSLGNRPGGSNKLYMTMVYLWVFIMIYLAFAAVFVTVRSIQEEVKDGSFTFSTLFTNSTFFSIIVSLGSTYVMWFIASIIFMDPWHMFTCFIQYILLTPTYINVLNIYAFCNTHDITWGTKGDDKAEKLPSANLKPGGKVDVNIPQDDGDLNAQYEAELMKFAQKPPKEIKTISEEERQADYYKGFRSSVVLVWVFCNFALGAVVLSSAGLDRFSDDAEAAETDRNNRAMIYMAVVLWSVAGLSIFKFLGAMWFLVVRMFRGV.

The segment at 1–63 is disordered; it reads MSYNRLGDPY…EMPSSDRLAE (63 aa). Low complexity predominate over residues 22-37; the sequence is NPSSLSNRSPSPGRPL. A run of 4 helical transmembrane segments spans residues 562–581, 605–625, 637–657, and 672–692; these read WLNG…YQLW, LFAW…TTYL, VLGV…FVLS, and MVYL…FVTV. Asparagine 712 carries an N-linked (GlcNAc...) asparagine glycan. Helical transmembrane passes span 715 to 735, 845 to 865, and 890 to 910; these read FFSI…ASII, VVLV…SSAG, and VVLW…MWFL.

It belongs to the chitin synthase family. Class I subfamily. As to expression, mainly expressed in hyphae and conidiphores. Relatively strongly expressed in young cleistothecia and in mature ascospores, but negligible in Huelle cells.

The protein localises to the cell membrane. Its subcellular location is the cell septum. It localises to the cell tip. It catalyses the reaction [(1-&gt;4)-N-acetyl-beta-D-glucosaminyl](n) + UDP-N-acetyl-alpha-D-glucosamine = [(1-&gt;4)-N-acetyl-beta-D-glucosaminyl](n+1) + UDP + H(+). Its function is as follows. Polymerizes chitin, a structural polymer of the cell wall and septum, by transferring the sugar moiety of UDP-GlcNAc to the non-reducing end of the growing chitin polymer. ChsC and chsA share critical functions in hyphal wall integrity and differentiation. ChsA and chsC share also overlapping roles in septum formation. The polypeptide is Chitin synthase C (Emericella nidulans (strain FGSC A4 / ATCC 38163 / CBS 112.46 / NRRL 194 / M139) (Aspergillus nidulans)).